The chain runs to 117 residues: Holo-[acyl-carrier-protein] synthase (117 aa).

Aspartate 8 and glutamate 57 together coordinate Mg(2+).

It belongs to the P-Pant transferase superfamily. AcpS family. Mg(2+) serves as cofactor.

It localises to the cytoplasm. It catalyses the reaction apo-[ACP] + CoA = holo-[ACP] + adenosine 3',5'-bisphosphate + H(+). Transfers the 4'-phosphopantetheine moiety from coenzyme A to a Ser of acyl-carrier-protein. This chain is Holo-[acyl-carrier-protein] synthase, found in Limosilactobacillus reuteri (Lactobacillus reuteri).